Consider the following 288-residue polypeptide: T-lymphocyte activation antigen CD80 (288 aa).

The N-terminal stretch at 1 to 34 (MGHTRRQGTSPSKCPYLNFFQLLVLAGLSHFCSG) is a signal peptide. The Ig-like V-type domain occupies 35–135 (VIHVTKEVKE…FKREHLAEVT (101 aa)). At 35-242 (VIHVTKEVKE…TTKQEHFPDN (208 aa)) the chain is on the extracellular side. 2 cysteine pairs are disulfide-bonded: Cys50-Cys116 and Cys162-Cys216. N-linked (GlcNAc...) asparagine glycans are attached at residues Asn53, Asn89, Asn98, Asn186, Asn207, Asn211, Asn226, and Asn232. Residues 145–230 (PSISDFEIPT…GHLRVNQTFN (86 aa)) enclose the Ig-like C2-type domain. A helical membrane pass occupies residues 243 to 263 (LLPSWAITLISVNGIFVICCL). 4 S-palmitoyl cysteine lipidation sites follow: Cys261, Cys262, Cys266, and Cys271. The Cytoplasmic portion of the chain corresponds to 264–288 (TYCFAPRCRERRRNERLRRESVRPV). Ser284 carries the phosphoserine modification.

As to quaternary structure, homodimer. Interacts with CTLA4; this interaction inhibits T-cell activation. Interacts with PDL1/CD274; this interaction blocks PDL1/PDCD1 binding and thus PDL1/CD274 inhibitory function. Interacts with CD28. (Microbial infection) Interacts with adenovirus subgroup B fiber proteins. In terms of assembly, (Microbial infection) Interacts with Orthopoxvirus OPG038/M2 protein, inhibiting the interaction with CTLA4/CD152. In terms of processing, palmitoylated by ZDHHC20; palmitoylation protects CD80 from ubiquitin-mediated degradation, regulating the protein stability, and ensures its accurate plasma membrane localization. As to expression, expressed on activated B-cells, macrophages and dendritic cells.

It is found in the cell membrane. In terms of biological role, costimulatory molecule that belongs to the immunoglobulin superfamily that plays an important role in T-lymphocyte activation. Acts as the primary auxiliary signal augmenting the MHC/TCR signal in naive T-cells together with the CD28 receptor which is constitutively expressed on the cell surface of T-cells. In turn, activates different signaling pathways such as NF-kappa-B or MAPK leading to the production of different cytokines. In addition, CD28/CD80 costimulatory signal stimulates glucose metabolism and ATP synthesis of T-cells by activating the PI3K/Akt signaling pathway. Also acts as a regulator of PDL1/PDCD1 interactions to limit excess engagement of PDL1 and its inhibitory role in immune responses. Expressed on B-cells, plays a critical role in regulating interactions between B-cells and T-cells in both early and late germinal center responses, which are crucial for the generation of effective humoral immune responses. (Microbial infection) Acts as a receptor for adenovirus subgroup B. This is T-lymphocyte activation antigen CD80 (CD80) from Homo sapiens (Human).